Reading from the N-terminus, the 145-residue chain is Selenoprotein M (145 aa).

An N-terminal signal peptide occupies residues 1 to 23 (MSLLLPPLALLLLLAALVAPATA). Catalysis depends on nucleophile residues cysteine 45 and selenocysteine 48. The cysteinyl-selenocysteine (Cys-Sec) cross-link spans 45–48 (CGGU). Residue selenocysteine 48 is a non-standard amino acid, selenocysteine.

Belongs to the selenoprotein M/F family. In terms of tissue distribution, widely expressed.

The protein localises to the cytoplasm. It is found in the perinuclear region. Its subcellular location is the endoplasmic reticulum. It localises to the golgi apparatus. May function as a thiol-disulfide oxidoreductase that participates in disulfide bond formation. The sequence is that of Selenoprotein M from Homo sapiens (Human).